The following is a 745-amino-acid chain: 1,4-alpha-glucan branching enzyme GlgB (745 aa).

Residue Asp-416 is the Nucleophile of the active site. Glu-469 functions as the Proton donor in the catalytic mechanism.

Belongs to the glycosyl hydrolase 13 family. GlgB subfamily. In terms of assembly, monomer.

It carries out the reaction Transfers a segment of a (1-&gt;4)-alpha-D-glucan chain to a primary hydroxy group in a similar glucan chain.. The protein operates within glycan biosynthesis; glycogen biosynthesis. Functionally, catalyzes the formation of the alpha-1,6-glucosidic linkages in glycogen by scission of a 1,4-alpha-linked oligosaccharide from growing alpha-1,4-glucan chains and the subsequent attachment of the oligosaccharide to the alpha-1,6 position. The chain is 1,4-alpha-glucan branching enzyme GlgB from Shewanella sp. (strain MR-4).